We begin with the raw amino-acid sequence, 1958 residues long: Sodium channel protein type 10 subunit alpha (1958 aa).

Over 1–125 (MEFPFGSVGT…FNLIRRTAIK (125 aa)) the chain is Cytoplasmic. The disordered stretch occupies residues 27 to 54 (QIAAHRAAKKGRPKQRGQKDKSEKPRPQ). Residues 32–42 (RAAKKGRPKQR) are compositionally biased toward basic residues. The span at 43-54 (GQKDKSEKPRPQ) shows a compositional bias: basic and acidic residues. The I repeat unit spans residues 116–404 (FNLIRRTAIK…VTMAYEEQSQ (289 aa)). A helical transmembrane segment spans residues 126–149 (VSVHSWFSIFITVTILVNCVCMTR). Topologically, residues 150–154 (TDLPE) are extracellular. A helical membrane pass occupies residues 155 to 174 (KLEYAFTVVYTFEALIKILA). Topologically, residues 175–187 (RGFCLNEFTYLRD) are cytoplasmic. A helical transmembrane segment spans residues 188–206 (PWNWLDFSVITLAYVGAAI). The Extracellular segment spans residues 207 to 212 (DLRGIS). The helical; Voltage-sensor transmembrane segment at 213 to 232 (GLRTFRVLRALKTVSVIPGL) threads the bilayer. Topologically, residues 233 to 248 (KVIVGALIHSVRKLAD) are cytoplasmic. A helical transmembrane segment spans residues 249-272 (VTILTVFCLSVFALVGLQLFKGNL). Residues 273 to 340 (KNKCIKNGTD…PDFNYTSFDS (68 aa)) lie on the Extracellular side of the membrane. Cys-276 and Cys-318 are oxidised to a cystine. N-linked (GlcNAc...) asparagine glycans are attached at residues Asn-279, Asn-288, Asn-311, and Asn-334. The segment at residues 341 to 365 (FAWAFLSLFRLMTQDSWERLYQQTL) is an intramembrane region (pore-forming). The Extracellular portion of the chain corresponds to 366–372 (RASGKMY). Residues 373 to 398 (MVFFVLVIFLGSFYLVNLILAVVTMA) form a helical membrane-spanning segment. Topologically, residues 399–658 (YEEQSQATIA…KWKKFKMVLF (260 aa)) are cytoplasmic. Phosphoserine is present on residues Ser-440, Ser-443, Ser-466, and Ser-478. Disordered stretches follow at residues 444–483 (HNGS…PYNQ) and 539–583 (GRGA…APEG). Residues 549 to 560 (PRSPLPQSPNPG) show a composition bias toward pro residues. Phosphoserine occurs at positions 611 and 614. An II repeat occupies 646–910 (CCPKWKKFKM…EDDGEVNNLQ (265 aa)). A helical membrane pass occupies residues 659 to 683 (ELVTDPFAELTITLCIVVNTVFMAM). Residues 684–694 (EHYPMTDAFDA) lie on the Extracellular side of the membrane. A helical membrane pass occupies residues 695-718 (MLQAGNIVFTVFFTMEMAFKIIAF). Over 719–726 (DPYYYFQK) the chain is Cytoplasmic. A helical transmembrane segment spans residues 727–746 (KWNIFDCVIVTVSLLELSTS). Over 747–752 (KKGSLS) the chain is Extracellular. The chain crosses the membrane as a helical; Voltage-sensor span at residues 753-772 (VLRTFRLLRVFKLAKSWPTL). The Cytoplasmic segment spans residues 773 to 788 (NMLIKIIGNSVGALGN). The helical transmembrane segment at 789 to 809 (LTFILAIIVFIFALVGKQLLS) threads the bilayer. Residues 810–833 (ENYGCRRDGISVWNGERLRWHMCD) lie on the Extracellular side of the membrane. The segment at residues 834–854 (FFHSFLVVFRILCGEWIENMW) is an intramembrane region (pore-forming). Topologically, residues 855-863 (VCMEVSQDY) are extracellular. A disulfide bridge connects residues Cys-856 and Cys-865. The helical transmembrane segment at 864-889 (ICLTLFLTVMVLGNLVVLNLFIALLL) threads the bilayer. The Cytoplasmic portion of the chain corresponds to 890-1148 (NSFSADNLTA…GWQVRKTCYR (259 aa)). The tract at residues 1006–1094 (DLDELEEDVE…SEGSTVDCPD (89 aa)) is disordered. The span at 1017-1038 (ASQSSWQEESPKGQQELLQQVQ) shows a compositional bias: polar residues. An III repeat occupies 1141-1450 (QVRKTCYRIV…KKYYNAMKKL (310 aa)). Residues 1149–1172 (IVEHSWFESFIIFMILLSSGALAF) form a helical membrane-spanning segment. Residues 1173–1185 (EDNYLEEKPRVKS) are Extracellular-facing. A helical transmembrane segment spans residues 1186–1211 (VLEYTDRVFTFIFVFEMLLKWVAYGF). At 1212-1217 (KKYFTN) the chain is on the cytoplasmic side. Residues 1218-1239 (AWCWLDFLIVNISLTSLIAKIL) form a helical membrane-spanning segment. Residues 1240-1243 (EYSD) lie on the Extracellular side of the membrane. The chain crosses the membrane as a helical; Voltage-sensor span at residues 1244-1265 (VASIKALRTLRALRPLRALSRF). Residues 1266 to 1284 (EGMRVVVDALVGAIPSIMN) lie on the Cytoplasmic side of the membrane. Residues 1285–1312 (VLLVCLIFWLIFSIMGVNLFAGKFSRCV) form a helical membrane-spanning segment. Residues 1313–1354 (DTRSNPFSVVNSTFVTNKSDCYNQNNTGHFFWVNVKVNFDNV) are Extracellular-facing. 3 N-linked (GlcNAc...) asparagine glycosylation sites follow: Asn-1323, Asn-1329, and Asn-1337. An intramembrane region (pore-forming) is located at residues 1355-1376 (AMGYLALLQVATFKGWMDIMYA). Topologically, residues 1377–1392 (AVDSRDINSQPNWEES) are extracellular. A helical transmembrane segment spans residues 1393–1419 (LYMYLYFVVFIIFGGFFTLNLFVGVII). Over 1420–1472 (DNFNQQKKKLGGQDIFMTEEQKKYYNAMKKLGSKKPQKPIPRPLNKYQGFVFD) the chain is Cytoplasmic. Ser-1452 is modified (phosphoserine; by PKC). An IV repeat occupies 1459-1758 (IPRPLNKYQG…WEKFDPEATQ (300 aa)). The chain crosses the membrane as a helical span at residues 1473–1496 (IVTRQAFDIIIMALICLNMITMMV). At 1497-1507 (ETDNQSEEKTK) the chain is on the extracellular side. Asn-1500 carries N-linked (GlcNAc...) asparagine glycosylation. The chain crosses the membrane as a helical span at residues 1508-1531 (VLGRINQFFVAVFTGECVMKMFAL). Residues 1532–1537 (RQYYFT) are Cytoplasmic-facing. The helical transmembrane segment at 1538 to 1561 (NGWNVFDFIVVILSISSLLFSAIL) threads the bilayer. At 1562 to 1573 (SSLESYFSPTLL) the chain is on the extracellular side. The helical; Voltage-sensor transmembrane segment at 1574 to 1595 (RVIRLARIGRILRLIRAAKGIR) threads the bilayer. Over 1596 to 1610 (TLLFALMMSLPALFN) the chain is Cytoplasmic. A helical transmembrane segment spans residues 1611–1633 (IGLLLFLVMFIYSIFGMASFANV). Over 1634–1647 (IDEAGIDDMFNFKT) the chain is Extracellular. The pore-forming intramembrane region spans 1648-1670 (FGNSMLCLFQITTSAGWDGLLSP). Residues 1671–1698 (ILNTGPPYCDPNRPNSNGSKGNCGSPAV) lie on the Extracellular side of the membrane. The N-linked (GlcNAc...) asparagine glycan is linked to Asn-1687. The chain crosses the membrane as a helical span at residues 1699 to 1723 (GILFFTTYIIISFLIVVNMYIAVIL). Topologically, residues 1724-1958 (ENFNVATEES…AKEGKSPGPQ (235 aa)) are cytoplasmic. Residues 1852–1881 (EDISATIIQKAYRNYMLQRSLMLSNPLHVP) enclose the IQ domain. A disordered region spans residues 1901-1958 (NDNGGLPDKSETASATSFPPSYDSVTRGLSDRANISTSSSMQNEDEVTAKEGKSPGPQ). Residues 1933 to 1942 (ANISTSSSMQ) are compositionally biased toward polar residues. Residues 1947-1958 (VTAKEGKSPGPQ) show a composition bias toward basic and acidic residues.

The protein belongs to the sodium channel (TC 1.A.1.10) family. Nav1.8/SCN10A subfamily. In terms of assembly, the channel consists of an ion conducting pore forming alpha-subunit regulated by one or more associated auxiliary subunits SCN1B, SCN2B and SCN3B; electrophysiological properties may vary depending on the type of the associated beta subunits. Found in a number of complexes with PRX, DYNLT1 and PDZD2. Interacts with proteins such as FSTL1, PRX, DYNLT1, PDZD2, S100A10 and many others. Interacts with NEDD4 and NEDD4L. In terms of processing, ubiquitinated by NEDD4L; which promotes its endocytosis. Post-translationally, phosphorylation at Ser-1452 by PKC in a highly conserved cytoplasmic loop slows inactivation of the sodium channel and reduces peak sodium currents. Lacks the cysteine which covalently binds the conotoxin GVIIJ. This cysteine (position 815) is speculated in other sodium channel subunits alpha to be implied in covalent binding with the sodium channel subunit beta-2 or beta-4. Expressed in dorsal root ganglion and trigeminal ganglion.

The protein localises to the cell membrane. It carries out the reaction Na(+)(in) = Na(+)(out). Its function is as follows. Tetrodotoxin-resistant channel that mediates the voltage-dependent sodium ion permeability of excitable membranes. Assuming opened or closed conformations in response to the voltage difference across the membrane, the protein forms a sodium-selective channel through which sodium ions may pass in accordance with their electrochemical gradient. Plays a role in neuropathic pain mechanisms. The polypeptide is Sodium channel protein type 10 subunit alpha (Mus musculus (Mouse)).